The sequence spans 122 residues: Large ribosomal subunit protein uL18 (122 aa).

Residues 1–19 (MSTLSRKQKTQKRHKRLRR) show a composition bias toward basic residues. Positions 1-26 (MSTLSRKQKTQKRHKRLRRNLSGTDQ) are disordered.

It belongs to the universal ribosomal protein uL18 family. In terms of assembly, part of the 50S ribosomal subunit; part of the 5S rRNA/L5/L18/L25 subcomplex. Contacts the 5S and 23S rRNAs.

In terms of biological role, this is one of the proteins that bind and probably mediate the attachment of the 5S RNA into the large ribosomal subunit, where it forms part of the central protuberance. This chain is Large ribosomal subunit protein uL18, found in Prochlorococcus marinus (strain SARG / CCMP1375 / SS120).